The sequence spans 293 residues: AKT-interacting protein homolog A (293 aa).

Residues Met1–Ser11 are compositionally biased toward polar residues. The tract at residues Met1 to Pro45 is disordered. A compositionally biased stretch (basic and acidic residues) spans Lys14–Ser23. Residues Thr24–Lys38 are compositionally biased toward polar residues. The region spanning Tyr75–Ser223 is the UBC core domain. Residues Ala256 to Lys266 are compositionally biased toward basic and acidic residues. The tract at residues Ala256–Thr293 is disordered.

Belongs to the ubiquitin-conjugating enzyme family. FTS subfamily.

It is found in the cytoplasm. The protein localises to the cell membrane. May function to promote vesicle trafficking and/or fusion. May also regulate apoptosis. The protein is AKT-interacting protein homolog A (aktip-a) of Xenopus laevis (African clawed frog).